The chain runs to 529 residues: HTH-type transcriptional activator Btr (529 aa).

The segment at residues 182–201 is a DNA-binding region (H-T-H motif); sequence LAQLSQMAGISAKHYSESFK. A Fe/B12 periplasmic-binding domain is found at 268 to 528; that stretch reads KIAAYGRGTM…QTVSLLSGDC (261 aa).

Binds with high affinity to both apo-bacillibactin and iron-bacillibactin.

Its subcellular location is the cytoplasm. In iron-limited conditions, activates expression of the feuABCybbA operon, which encodes the bacillibactin uptake system. Acts by binding directly to a conserved direct repeat element upstream of the feuA promoter. Activity is increased in the presence of bacillibactin. This is HTH-type transcriptional activator Btr (btr) from Bacillus subtilis (strain 168).